The sequence spans 777 residues: Phosphoribosylformylglycinamidine synthase subunit PurL (777 aa).

The active site involves histidine 50. 2 residues coordinate ATP: tyrosine 53 and lysine 92. A Mg(2+)-binding site is contributed by glutamate 94. Substrate-binding positions include 95–98 and arginine 117; that span reads SHNH. Residue histidine 96 is the Proton acceptor of the active site. Aspartate 118 lines the Mg(2+) pocket. Substrate is bound at residue glutamine 241. Position 269 (aspartate 269) interacts with Mg(2+). 313 to 315 contacts substrate; that stretch reads ESQ. Residues aspartate 520 and glycine 557 each contribute to the ATP site. Asparagine 558 lines the Mg(2+) pocket. Serine 560 contacts substrate.

Belongs to the FGAMS family. In terms of assembly, monomer. Part of the FGAM synthase complex composed of 1 PurL, 1 PurQ and 2 PurS subunits.

Its subcellular location is the cytoplasm. The catalysed reaction is N(2)-formyl-N(1)-(5-phospho-beta-D-ribosyl)glycinamide + L-glutamine + ATP + H2O = 2-formamido-N(1)-(5-O-phospho-beta-D-ribosyl)acetamidine + L-glutamate + ADP + phosphate + H(+). It functions in the pathway purine metabolism; IMP biosynthesis via de novo pathway; 5-amino-1-(5-phospho-D-ribosyl)imidazole from N(2)-formyl-N(1)-(5-phospho-D-ribosyl)glycinamide: step 1/2. Its function is as follows. Part of the phosphoribosylformylglycinamidine synthase complex involved in the purines biosynthetic pathway. Catalyzes the ATP-dependent conversion of formylglycinamide ribonucleotide (FGAR) and glutamine to yield formylglycinamidine ribonucleotide (FGAM) and glutamate. The FGAM synthase complex is composed of three subunits. PurQ produces an ammonia molecule by converting glutamine to glutamate. PurL transfers the ammonia molecule to FGAR to form FGAM in an ATP-dependent manner. PurS interacts with PurQ and PurL and is thought to assist in the transfer of the ammonia molecule from PurQ to PurL. The chain is Phosphoribosylformylglycinamidine synthase subunit PurL from Trichormus variabilis (strain ATCC 29413 / PCC 7937) (Anabaena variabilis).